The chain runs to 206 residues: Small ribosomal subunit protein uS2 (206 aa).

This sequence belongs to the universal ribosomal protein uS2 family.

This chain is Small ribosomal subunit protein uS2, found in Methanothrix thermoacetophila (strain DSM 6194 / JCM 14653 / NBRC 101360 / PT) (Methanosaeta thermophila).